The primary structure comprises 268 residues: Gasdermin bGSDM (268 aa).

Residue Cys-3 is the site of S-palmitoyl cysteine attachment. A run of 4 beta stranded transmembrane segments spans residues 78–94 (IDLR…AAKI), 103–121 (APSF…FHIE), 168–185 (KMRM…GVDV), and 195–211 (AKLE…RLVF). Residues 248–268 (GENMALNLFTEIQDAGFIEVT) form a C-terminal region region.

The protein belongs to the bacterial gasdermin family. Monomer in solution. In terms of assembly, forms large, homooligomeric ring-shaped pores when inserted in membranes. Post-translationally, cleavage by the adjacently encoded protease (G563DRAFT_02009) between Leu-247 and Gly-248 relieves autoinhibition, releasing the N-terminus which initiates loss of cell integrity. Palmitoylation helps stabilize the inactive state; may self-palmitoylate. Palmitoylation is not required for permeabilization of liposomes by the ring-like pores in vitro. Palmitoylation plays a significant role in pore formation.

The protein resides in the cytoplasm. Its subcellular location is the cell inner membrane. With respect to regulation, the full-length protein before cleavage is inactive: intramolecular interactions between the N-terminal domain and the C-terminal region, as well as the lipid modification, mediate autoinhibition. The pyroptosis-like-inducing activity is carried by the released N-terminal domain (gasdermin bGSDM, N-terminus). Its function is as follows. Precursor of a pore-forming protein involved in defense against bacteriophages. Cleavage of this precursor by its dedicated, neighboring protease (G563DRAFT_02009) releases the active moiety (gasdermin bGSDM, N-terminus) which inserts into membranes, forming pores and triggering cell death. Expression of bGSDM and its protease is highly toxic in E.coli. Cells expressing the gene pair stop dividing and lose membrane integrity. Both proteins are required to kill E.coli. Pore-forming protein that causes membrane permeabilization via a pyroptosis-like activity. Makes ring-like pores with walls about 50 Angstroms thick and an interior pore diameter of 200-300 Angstroms, when integrated in liposomes. The chain is Gasdermin bGSDM from Runella zeae (strain ATCC BAA-293 / DSM 19591 / LMG 21438 / NS12).